The chain runs to 106 residues: UPF0145 protein Csac_0771 (106 aa).

Belongs to the UPF0145 family.

The protein is UPF0145 protein Csac_0771 of Caldicellulosiruptor saccharolyticus (strain ATCC 43494 / DSM 8903 / Tp8T 6331).